A 691-amino-acid polypeptide reads, in one-letter code: T-box transcription factor TBX2-B (691 aa).

The T-box DNA-binding region spans 104–277 (LWDQFHKIGT…HNPFAKGFRD (174 aa)). Disordered regions lie at residues 301-440 (CKAD…SLSK) and 612-691 (NLLT…ESPK). Positions 325 to 335 (HSPLSAAPSPL) are enriched in low complexity. Composition is skewed to basic and acidic residues over residues 340-361 (TNRE…EVRS), 378-402 (RLED…RKDG), and 415-433 (SLEK…KSDP). Over residues 624-639 (PGSESSKPGSSRESSP) the composition is skewed to low complexity. A coiled-coil region spans residues 659 to 684 (SMKDSINELQRIQRLVSGLERQREVS). The span at 678-691 (ERQREVSPGRESPK) shows a compositional bias: basic and acidic residues.

As to quaternary structure, binds DNA as a monomer.

The protein resides in the nucleus. Its function is as follows. Transcription factor which acts as a transcriptional repressor. May also function as a transcriptional activator. Binds to the palindromic T site 5'-TTCACACCTAGGTGTGAA-3' DNA sequence, or a half-site, which are present in the regulatory region of several genes. The sequence is that of T-box transcription factor TBX2-B (tbx2-b) from Xenopus laevis (African clawed frog).